A 341-amino-acid polypeptide reads, in one-letter code: Ferredoxin--NADP reductase (341 aa).

The FAD site is built by D38, Q46, Y51, V91, F125, D292, and T333.

The protein belongs to the ferredoxin--NADP reductase type 2 family. As to quaternary structure, homodimer. FAD serves as cofactor.

It carries out the reaction 2 reduced [2Fe-2S]-[ferredoxin] + NADP(+) + H(+) = 2 oxidized [2Fe-2S]-[ferredoxin] + NADPH. The polypeptide is Ferredoxin--NADP reductase (Gluconacetobacter diazotrophicus (strain ATCC 49037 / DSM 5601 / CCUG 37298 / CIP 103539 / LMG 7603 / PAl5)).